The following is a 115-amino-acid chain: Regulator of ribonuclease activity B (115 aa).

Belongs to the RraB family. As to quaternary structure, interacts with the C-terminal region of Rne.

The protein resides in the cytoplasm. In terms of biological role, globally modulates RNA abundance by binding to RNase E (Rne) and regulating its endonucleolytic activity. Can modulate Rne action in a substrate-dependent manner by altering the composition of the degradosome. The chain is Regulator of ribonuclease activity B from Aeromonas salmonicida (strain A449).